A 233-amino-acid chain; its full sequence is Beta-fibrinogenase brevinase (233 aa).

The Peptidase S1 domain occupies 1–224; it reads VIGGDECNIN…YIDWIQSIIA (224 aa). Disulfide bonds link C7/C138, C25/C41, C73/C231, C117/C185, C149/C164, and C175/C200. The active-site Charge relay system is H40. The N-linked (GlcNAc...) asparagine glycan is linked to N54. Residue D85 is the Charge relay system of the active site. The N-linked (GlcNAc...) asparagine glycan is linked to N129. The Cell attachment site signature appears at 176 to 178; sequence RGD. S179 (charge relay system) is an active-site residue. N226 is a glycosylation site (N-linked (GlcNAc...) asparagine).

It belongs to the peptidase S1 family. Snake venom subfamily. As to quaternary structure, heterodimer of the brevinase A chain and the brevinase B chain. In terms of tissue distribution, expressed by the venom gland.

Its subcellular location is the secreted. Its activity is regulated as follows. The fibrinolytic activity is completely inhibited by PMSF, diisopropylfluorophosphate (DFP), pefabloc, dithiothreitol (DTT) and Zn(2+), but not by Pepstatin A, E64, iodoacetate, chymostatin, tosyl-Lphenylalanine chloromethyl ketone (TPCK), soybean trypsin inhibitor (SBTI), phosphoramidon, Ca(2+), Co(2+), Cu(2+), Fe(2+), Mg(2+), Mn(2+), K(+), and Na(+). Snake venom serine protease that has fibrinogenolytic activities. Preferentially cleaves the Bbeta-chain (FGB) and more slowly the Aa-chain (FGA) of fibrinogen, but does not affect the gamma-chain. Also has fibrinolytic activity. May play a role in antithrombotic reaction as well as thrombolytic reaction. In Gloydius blomhoffii (Mamushi), this protein is Beta-fibrinogenase brevinase.